The sequence spans 257 residues: MSGAGNDFIVIDNRQGLFNLTHEQVRAMCTRRTGIGADGLILLETSETADFRMNYHNADGFPGTMCGNGGRCAVWFAHLIGIRPTGKHYRFEAGPSTYEAEVTGEESVRLHMLPPSDFRDGLQAGAWNCHFVDTGSPHAIAYVNNLDQLDVLTEGGNIRHNKELFPDGTNVNFLEITAPDALSIRTFERGVEDETLACGTGTVAAALMSFRLGKVTSSLVRVKVKSGETLMVGFNEMMDEIYLEGPARAVYRGTITL.

Positions 6 and 57 each coordinate substrate. Cysteine 66 serves as the catalytic Proton donor. Substrate-binding positions include 67–68 (GN), asparagine 170, and 188–189 (ER). Residue cysteine 198 is the Proton acceptor of the active site. 199 to 200 (GT) provides a ligand contact to substrate.

It belongs to the diaminopimelate epimerase family. In terms of assembly, homodimer.

Its subcellular location is the cytoplasm. The enzyme catalyses (2S,6S)-2,6-diaminopimelate = meso-2,6-diaminopimelate. The protein operates within amino-acid biosynthesis; L-lysine biosynthesis via DAP pathway; DL-2,6-diaminopimelate from LL-2,6-diaminopimelate: step 1/1. Catalyzes the stereoinversion of LL-2,6-diaminopimelate (L,L-DAP) to meso-diaminopimelate (meso-DAP), a precursor of L-lysine and an essential component of the bacterial peptidoglycan. The chain is Diaminopimelate epimerase from Chlorobaculum tepidum (strain ATCC 49652 / DSM 12025 / NBRC 103806 / TLS) (Chlorobium tepidum).